The primary structure comprises 2061 residues: Myoferlin (2061 aa).

One can recognise a C2 1 domain in the interval 1 to 101; it reads MLRVIVESAS…TGDQSRSLPY (101 aa). The Cytoplasmic portion of the chain corresponds to 1–2025; that stretch reads MLRVIVESAS…MKFIVWRRFK (2025 aa). The segment at 123-172 is disordered; that stretch reads GYDPPSAPHPNDLSGPSVPGMGGDGEEDEGDEDRLDNAVRGPGPKGPVGT. Residues 146–156 are compositionally biased toward acidic residues; the sequence is DGEEDEGDEDR. Residue Ser174 is modified to Phosphoserine. 2 consecutive C2 domains span residues 181–300 and 339–474; these read RLTK…RKWL and DSDD…VEDF. Residues 186–281 form a necessary for interaction with EHD2 region; sequence KNSRRMLSNK…RADCLMGEFK (96 aa). Positions 323–342 are disordered; it reads LGTGDEPPPERRDRDNDSDD. The Ca(2+) site is built by Asp390, Asp396, Asp444, Asp446, and Asp452. Lys553 carries the post-translational modification N6-acetyllysine. Phosphoserine is present on Ser729. The residue at position 884 (Lys884) is an N6-acetyllysine. Positions 938 to 967 are disordered; the sequence is ESRYPGGDWKPAEDTYTDANGDKAASPSEL. C2 domains are found at residues 1123 to 1251 and 1282 to 1410; these read GANT…LLWH and LPPQ…GKED. Residues Asp1155, Asp1161, Asp1217, and Asp1219 each contribute to the Ca(2+) site. Lys1507 is modified (N6-acetyllysine). 2 consecutive C2 domains span residues 1536–1654 and 1772–1920; these read PAPP…SHCG and GPPG…EKCR. Asp1569, Asp1575, Asp1624, Asp1626, Asp1891, Ser1894, and Asp1897 together coordinate Ca(2+). Ser1915 bears the Phosphoserine mark. Residues 2026-2046 form a helical membrane-spanning segment; it reads WVIIGLLFLLILLLFVAVLLY. The Extracellular segment spans residues 2047–2061; the sequence is SLPNYLSMKIVKPNV.

It belongs to the ferlin family. As to quaternary structure, interacts with DNM2 and KDR. Interacts with EHD1. Interacts with EHD2; the interaction is direct. Interacts with RIPOR2. It depends on Ca(2+) as a cofactor. In terms of tissue distribution, expressed in myoblast and endothelial cells (at protein level). Highly expressed in cardiac and skeletal muscles. Also present in lung, and at very low levels in kidney, placenta and brain.

The protein localises to the cell membrane. It localises to the nucleus membrane. The protein resides in the cytoplasmic vesicle membrane. Functionally, calcium/phospholipid-binding protein that plays a role in the plasmalemma repair mechanism of endothelial cells that permits rapid resealing of membranes disrupted by mechanical stress. Involved in endocytic recycling. Implicated in VEGF signal transduction by regulating the levels of the receptor KDR. This is Myoferlin (MYOF) from Homo sapiens (Human).